Here is an 86-residue protein sequence, read N- to C-terminus: Toxin Aam3 (86 aa).

The signal sequence occupies residues 1–19 (MNYLVMISLALLFMIGVES). Residues 21–85 (RDGYIAQPNN…PIKIIGQKCT (65 aa)) form the LCN-type CS-alpha/beta domain. 4 disulfide bridges follow: cysteine 31–cysteine 84, cysteine 35–cysteine 56, cysteine 42–cysteine 66, and cysteine 46–cysteine 68.

This sequence belongs to the long (4 C-C) scorpion toxin superfamily. Sodium channel inhibitor family. Alpha subfamily. Post-translationally, the C-terminal basic residue is removed by a carboxypeptidase. In terms of tissue distribution, expressed by the venom gland.

The protein localises to the secreted. Its function is as follows. Alpha toxins bind voltage-independently at site-3 of sodium channels (Nav) and inhibit the inactivation of the activated channels, thereby blocking neuronal transmission. This Androctonus amoreuxi (African fattail scorpion) protein is Toxin Aam3.